Consider the following 324-residue polypeptide: Polyketide biosynthesis acyltransferase homolog PksD (324 aa).

The active site involves Ser-99.

It is found in the cytoplasm. It participates in antibiotic biosynthesis; bacillaene biosynthesis. Probably involved in some intermediate steps for the synthesis of the antibiotic polyketide bacillaene which is involved in secondary metabolism. The polypeptide is Polyketide biosynthesis acyltransferase homolog PksD (pksD) (Bacillus subtilis (strain 168)).